The sequence spans 416 residues: Lipase (416 aa).

Positions 1–28 (MKCCRIMFVLLGLWFVFGLSVPGGRTEA) are cleaved as a signal peptide. Ser141 (nucleophile) is an active-site residue. Gly314 provides a ligand contact to Ca(2+). Asp345 acts as the Charge relay system in catalysis. Asp385 contacts Ca(2+). The active-site Charge relay system is His386. Residues Glu388, Asp393, and Pro394 each coordinate Ca(2+).

This sequence belongs to the AB hydrolase superfamily. As to quaternary structure, homodimer.

The protein localises to the secreted. It carries out the reaction a triacylglycerol + H2O = a diacylglycerol + a fatty acid + H(+). Activity is inhibited by zinc and iron ions, and activated in vitro in 25% v/v DMSO and acetone. Its function is as follows. Triacylglycerol hydrolase that shows hydrolysis preference towards some of the natural oils such as olive, sunflower and corn oils. This chain is Lipase, found in Bacillus sp.